The chain runs to 842 residues: Leucine--tRNA ligase (842 aa).

The 'HIGH' region motif lies at 44–55 (PYPSANGLHVGH). A 'KMSKS' region motif is present at residues 619–623 (KMSKS). An ATP-binding site is contributed by lysine 622.

Belongs to the class-I aminoacyl-tRNA synthetase family.

The protein resides in the cytoplasm. The enzyme catalyses tRNA(Leu) + L-leucine + ATP = L-leucyl-tRNA(Leu) + AMP + diphosphate. The sequence is that of Leucine--tRNA ligase from Borrelia duttonii (strain Ly).